Reading from the N-terminus, the 546-residue chain is CTP synthase (546 aa).

Residues 1 to 265 are amidoligase domain; it reads MTKYVFVTGG…DEIVCHKLGI (265 aa). S13 contacts CTP. UTP is bound at residue S13. ATP contacts are provided by residues 14-19 and D71; that span reads SLGKGI. Positions 71 and 139 each coordinate Mg(2+). CTP-binding positions include 146 to 148, 186 to 191, and K222; these read DIE and KTKPTQ. Residues 186 to 191 and K222 contribute to the UTP site; that span reads KTKPTQ. Residues 290-543 enclose the Glutamine amidotransferase type-1 domain; that stretch reads DIAFVGKYVD…VKAAIARHSA (254 aa). G351 contributes to the L-glutamine binding site. The active-site Nucleophile; for glutamine hydrolysis is C378. L-glutamine contacts are provided by residues 379–382, E402, and R469; that span reads LGMQ. Active-site residues include H516 and E518.

It belongs to the CTP synthase family. As to quaternary structure, homotetramer.

The catalysed reaction is UTP + L-glutamine + ATP + H2O = CTP + L-glutamate + ADP + phosphate + 2 H(+). It catalyses the reaction L-glutamine + H2O = L-glutamate + NH4(+). The enzyme catalyses UTP + NH4(+) + ATP = CTP + ADP + phosphate + 2 H(+). It participates in pyrimidine metabolism; CTP biosynthesis via de novo pathway; CTP from UDP: step 2/2. With respect to regulation, allosterically activated by GTP, when glutamine is the substrate; GTP has no effect on the reaction when ammonia is the substrate. The allosteric effector GTP functions by stabilizing the protein conformation that binds the tetrahedral intermediate(s) formed during glutamine hydrolysis. Inhibited by the product CTP, via allosteric rather than competitive inhibition. In terms of biological role, catalyzes the ATP-dependent amination of UTP to CTP with either L-glutamine or ammonia as the source of nitrogen. Regulates intracellular CTP levels through interactions with the four ribonucleotide triphosphates. The chain is CTP synthase from Azoarcus sp. (strain BH72).